The sequence spans 116 residues: Non-specific lipid transfer protein GPI-anchored 17 (116 aa).

The N-terminal stretch at 1 to 24 (MKIGVVLVLLTVFVVVMSSTSVSA) is a signal peptide. Cystine bridges form between Cys31–Cys74, Cys42–Cys58, and Cys59–Cys99. Residue Asn107 is the site of GPI-anchor amidated asparagine attachment. The propeptide at 108-116 (GKNFKNTSL) is removed in mature form. Asn113 carries an N-linked (GlcNAc...) asparagine glycan.

It belongs to the plant LTP family. Expressed in seedlings, preferentially in roots.

The protein localises to the cell membrane. In terms of biological role, probable lipid transfer protein. In Arabidopsis thaliana (Mouse-ear cress), this protein is Non-specific lipid transfer protein GPI-anchored 17.